The chain runs to 633 residues: Guanylate-binding protein 6 (633 aa).

Positions 1–310 are GTPase domain (Globular); the sequence is MESGPKMLAP…EAVNSGAVPC (310 aa). Residues 35–277 enclose the GB1/RHD3-type G domain; that stretch reads SQPVVVVAIV…FSSYIFTHAR (243 aa). Residues 45–52, 67–69, and 97–101 each bind GTP; these read GLYRTGKS, LGS, and DTEGL.

It belongs to the TRAFAC class dynamin-like GTPase superfamily. GB1/RHD3 GTPase family. GB1 subfamily.

It localises to the cytoplasmic vesicle. The catalysed reaction is GTP + H2O = GDP + phosphate + H(+). Interferon (IFN)-inducible GTPase that plays important roles in innate immunity against a diverse range of bacterial, viral and protozoan pathogens, such as bacterial pathogens Listeria monocytogenes and Mycobacterium bovis BCG as well as the protozoan pathogen Toxoplasma gondii. Confers protection to several pathogens, including the bacterial pathogens Listeria monocytogenes and Mycobacterium bovis BCG as well as the protozoan pathogen Toxoplasma gondii. The sequence is that of Guanylate-binding protein 6 (GBP6) from Pongo abelii (Sumatran orangutan).